A 119-amino-acid chain; its full sequence is Large ribosomal subunit protein uL14 (119 aa).

This sequence belongs to the universal ribosomal protein uL14 family. In terms of assembly, part of the 50S ribosomal subunit. Forms a cluster with proteins L3 and L19. In the 70S ribosome, L14 and L19 interact and together make contacts with the 16S rRNA in bridges B5 and B8.

Functionally, binds to 23S rRNA. Forms part of two intersubunit bridges in the 70S ribosome. This chain is Large ribosomal subunit protein uL14, found in Ehrlichia canis (strain Jake).